Here is a 395-residue protein sequence, read N- to C-terminus: ATP phosphoribosyltransferase regulatory subunit (395 aa).

The protein belongs to the class-II aminoacyl-tRNA synthetase family. HisZ subfamily. As to quaternary structure, heteromultimer composed of HisG and HisZ subunits.

Its subcellular location is the cytoplasm. The protein operates within amino-acid biosynthesis; L-histidine biosynthesis; L-histidine from 5-phospho-alpha-D-ribose 1-diphosphate: step 1/9. Required for the first step of histidine biosynthesis. May allow the feedback regulation of ATP phosphoribosyltransferase activity by histidine. The sequence is that of ATP phosphoribosyltransferase regulatory subunit from Thioalkalivibrio sulfidiphilus (strain HL-EbGR7).